Here is a 212-residue protein sequence, read N- to C-terminus: Phosphoribosylglycinamide formyltransferase (212 aa).

12–14 is a binding site for N(1)-(5-phospho-beta-D-ribosyl)glycinamide; it reads GTN. (6R)-10-formyltetrahydrofolate contacts are provided by residues 90–93 and N107; that span reads MKIL. H109 (proton donor) is an active-site residue.

This sequence belongs to the GART family.

It catalyses the reaction N(1)-(5-phospho-beta-D-ribosyl)glycinamide + (6R)-10-formyltetrahydrofolate = N(2)-formyl-N(1)-(5-phospho-beta-D-ribosyl)glycinamide + (6S)-5,6,7,8-tetrahydrofolate + H(+). It participates in purine metabolism; IMP biosynthesis via de novo pathway; N(2)-formyl-N(1)-(5-phospho-D-ribosyl)glycinamide from N(1)-(5-phospho-D-ribosyl)glycinamide (10-formyl THF route): step 1/1. Its function is as follows. Catalyzes the transfer of a formyl group from 10-formyltetrahydrofolate to 5-phospho-ribosyl-glycinamide (GAR), producing 5-phospho-ribosyl-N-formylglycinamide (FGAR) and tetrahydrofolate. This is Phosphoribosylglycinamide formyltransferase from Haemophilus influenzae (strain ATCC 51907 / DSM 11121 / KW20 / Rd).